We begin with the raw amino-acid sequence, 258 residues long: MRGFNNKIKSVYQELTNSKEKFGSFHKTLIHLHTPVSYDYKLFSNWTATKYRKITEDELYDIFFENKKIKVDKTIFFSNFDKVVFSSSKEYISFLMLAEAIIKNGIEIVVVTDHNTTKGIKKLQMAVSIIMKNYPIYDIHPHILHGVEISAADKLHIVCIYDYEQESWVNQWLSENIISEKDGSYQHSLTIMKDFNNQKIVNYIAHFNSYDILKKGSHLSGAYKRKIFSKENTRFWSLILTRKNLRNNLIFSIKKLVY.

This is an uncharacterized protein from Streptococcus pneumoniae serotype 4 (strain ATCC BAA-334 / TIGR4).